An 876-amino-acid polypeptide reads, in one-letter code: Valine--tRNA ligase (876 aa).

Residues 44–54 (PNVTGKLHLGH) carry the 'HIGH' region motif. A 'KMSKS' region motif is present at residues 520 to 524 (KMSKS). Lys-523 lines the ATP pocket. Residues 805-876 (LEGLIDMDKE…VKNRIEQLKA (72 aa)) are a coiled coil.

The protein belongs to the class-I aminoacyl-tRNA synthetase family. ValS type 1 subfamily. As to quaternary structure, monomer.

It localises to the cytoplasm. The enzyme catalyses tRNA(Val) + L-valine + ATP = L-valyl-tRNA(Val) + AMP + diphosphate. Functionally, catalyzes the attachment of valine to tRNA(Val). As ValRS can inadvertently accommodate and process structurally similar amino acids such as threonine, to avoid such errors, it has a 'posttransfer' editing activity that hydrolyzes mischarged Thr-tRNA(Val) in a tRNA-dependent manner. The protein is Valine--tRNA ligase of Staphylococcus haemolyticus (strain JCSC1435).